The following is an 85-amino-acid chain: uncharacterized protein (85 aa).

Disordered regions lie at residues 1–22 and 41–85; these read MFAP…TSGF and EKER…SFLR. Residues 75–85 are compositionally biased toward polar residues; sequence FPSNYRGSFLR.

This is an uncharacterized protein from Dryophytes versicolor (chameleon treefrog).